The primary structure comprises 174 residues: Interferon gamma (174 aa).

Positions 1-23 are cleaved as a signal peptide; the sequence is MNSTRCILALLLCLTQAMSGCYG. Pyrrolidone carboxylic acid is present on Q24. N-linked (GlcNAc...) asparagine glycans are attached at residues N39 and N106.

This sequence belongs to the type II (or gamma) interferon family. In terms of assembly, homodimer. Interacts with IFNGR1 (via extracellular domain); this interaction promotes IFNGR1 dimerization. In terms of tissue distribution, released primarily from activated T lymphocytes.

Its subcellular location is the secreted. Its function is as follows. Type II interferon produced by immune cells such as T-cells and NK cells that plays crucial roles in antimicrobial, antiviral, and antitumor responses by activating effector immune cells and enhancing antigen presentation. Primarily signals through the JAK-STAT pathway after interaction with its receptor IFNGR1 to affect gene regulation. Upon IFNG binding, IFNGR1 intracellular domain opens out to allow association of downstream signaling components JAK2, JAK1 and STAT1, leading to STAT1 activation, nuclear translocation and transcription of IFNG-regulated genes. Many of the induced genes are transcription factors such as IRF1 that are able to further drive regulation of a next wave of transcription. Plays a role in class I antigen presentation pathway by inducing a replacement of catalytic proteasome subunits with immunoproteasome subunits. In turn, increases the quantity, quality, and repertoire of peptides for class I MHC loading. Increases the efficiency of peptide generation also by inducing the expression of activator PA28 that associates with the proteasome and alters its proteolytic cleavage preference. Up-regulates as well MHC II complexes on the cell surface by promoting expression of several key molecules such as cathepsins B/CTSB, H/CTSH, and L/CTSL. Participates in the regulation of hematopoietic stem cells during development and under homeostatic conditions by affecting their development, quiescence, and differentiation. In Phodopus sungorus (Striped hairy-footed hamster), this protein is Interferon gamma (IFNG).